The following is a 52-amino-acid chain: Conotoxin Cal9.2c (52 aa).

A propeptide spanning residues 1 to 6 is cleaved from the precursor; the sequence is KKGVTL. Cystine bridges form between Cys14-Cys31, Cys19-Cys41, and Cys21-Cys46.

In terms of tissue distribution, expressed by the venom duct.

It localises to the secreted. In terms of biological role, probable neurotoxin with unknown target. Possibly targets ion channels. This chain is Conotoxin Cal9.2c, found in Californiconus californicus (California cone).